A 674-amino-acid polypeptide reads, in one-letter code: Zyxin (674 aa).

Positions 35-447 (PPKPKVNPFR…PHQDQTSGSQ (413 aa)) are disordered. Residues 86 to 109 (LPPPPPNEEPMSPPGSSFPPPPPS) are compositionally biased toward pro residues. Residues 110-120 (FGDDGPGSPLG) show a composition bias toward low complexity. 5 stretches are compositionally biased toward pro residues: residues 121 to 148 (LFPP…PPPL), 162 to 180 (ASVP…PAPP), 187 to 209 (KPAP…PPQS), 222 to 240 (KPSP…PPVA), and 254 to 266 (AAPP…PPAP). Basic and acidic residues-rich tracts occupy residues 328 to 341 (AKHE…KHEA) and 358 to 387 (QRDK…RGER). 3 consecutive LIM zinc-binding domains span residues 481–542 (ELCG…TLEC), 543–600 (CAVC…RRYA), and 601–671 (PRCT…RARA).

The protein belongs to the zyxin/ajuba family. As to quaternary structure, interacts (via LIM2 domain) with hesx1/anf1.

It is found in the cytoplasm. The protein localises to the cytoskeleton. Its subcellular location is the cell junction. The protein resides in the focal adhesion. Its function is as follows. Adhesion plaque protein. May be a component of a signal transduction pathway that mediates adhesion-stimulated changes in gene expression. Suppresses the transcription-repressing activity of hesx1/anf1. The chain is Zyxin from Xenopus tropicalis (Western clawed frog).